Consider the following 517-residue polypeptide: MADPPHFSLFQQKFRTGDKPFLTLDADFLMNHTKVLLKSDASDKVWKVKLDGGRLSEGWEEFACDQKFRDGDVLVFKHHGDEVFHVAVVSPSVSGDIRNASSSQVITEDTYIDVDDVDDDDYGQDDEDDDDDDDEGEDNIENISEKTDKRQEADSSSDHSGFITARVTRYSLLHDRLDLSRNFTLLFGGHQKTCEIDVVDEQGRRWTMKLAKNISSGVFYIRLGWGNFCCANGLTQGDLCKFKLFQNEERPVLWLCPQESGNGRKEKRTFDEVSKGKEKKTPSPFLIVKYTPSRETTGQLSLPVSFTRNNSINKTGEVILLNQDGRKWSSYLQITGLGRGAGSEWFYLRRGWREMCEANGVGVNDSFKLELVWEGANPMFKFCSKIENHEYKGKGNQRTRKKRACETAPQPRNVKKTPRLGVEGPVYQVDEERGHTQVSNRTNTISGNLQRLLPPSCSVSDQVANVKQGIVDSLNTVRQCRTELETSEQNLQASLLAIDALGERIWGISKILSSNLV.

The segment at residues 7–92 (FSLFQQKFRT…VFHVAVVSPS (86 aa)) is a DNA-binding region (TF-B3 1). Residues 115 to 140 (DDVDDDDYGQDDEDDDDDDDEGEDNI) are compositionally biased toward acidic residues. Residues 115–158 (DDVDDDDYGQDDEDDDDDDDEGEDNIENISEKTDKRQEADSSSD) form a disordered region. Positions 143–157 (ISEKTDKRQEADSSS) are enriched in basic and acidic residues. DNA-binding regions (TF-B3) lie at residues 162–259 (FITA…CPQE) and 285–385 (FLIV…FCSK). Residues 393-415 (GKGNQRTRKKRACETAPQPRNVK) form a disordered region.

As to expression, expressed in the shoot apical meristem (SAM), in the inflorescence apex and flowers.

Its subcellular location is the nucleus. In terms of biological role, may play a role in flower development. This Arabidopsis thaliana (Mouse-ear cress) protein is B3 domain-containing protein REM1 (REM1).